A 286-amino-acid polypeptide reads, in one-letter code: Replication protein RepA (286 aa).

This sequence belongs to the initiator RepB protein family.

RepA is essential for origin function, autoregulates its own synthesis from the promoter, and, when overproduced, blocks origin function. In Escherichia coli, this protein is Replication protein RepA (repA).